The primary structure comprises 162 residues: Large ribosomal subunit protein uL30 (162 aa).

Belongs to the universal ribosomal protein uL30 family. In terms of assembly, part of the 50S ribosomal subunit.

The polypeptide is Large ribosomal subunit protein uL30 (Korarchaeum cryptofilum (strain OPF8)).